We begin with the raw amino-acid sequence, 741 residues long: MDSNTNENNSHASSNERQSSEGHDDYLNRNPNSEATEGEEGTHPTTGTQPVAFSIGTMFIITPQANFEGGENDPFANPFQPPVKRAVKEAWDSFEPLSNDQLMDLTCPICYDDMNENDEKQATKMPCGHIFGKNCLQKWLENHCTCPLCRKEVPHETVGSAHPPILFIIPHSHTLRGNQGNTAVSQENASNGVHSDFHPSEELNNANTDGRTGVDEPARQLHRIAFNRIRFILAPNRSATNTPVENTHPENPDSNTSTPTTRSEPLAGEGASIDAENASSRQETTPSDSRPSTLTSLFNAFFSSMPDRPSSNEPMTSNLTSNSGSMTNSTSTDLPTSNLPSQNAPARPVEPSPSIQPPNLLNLPTASPESTSWLPGSQTNIPANTNRSERPFTQLMTFHGLPSLADLPAVLESMFRPSGNNNLLNLNGIFHPDHNAQTENGQTLPENTDDTNSNATSAVPNLQNLNQQNAVTMGTNTPNNGSSPAVHPVIHIYLSRPPLQPAVSEQETPSEAVSREGTRSTDATMEDSSRPPSNGSFQGPGITHLSEMGQRILQRFQEEMENRMNQTRSESSTPAQQSAAGSSINVDTAGRQPSDEINIPGEYENSSEVAGSRNQTPTHSSIAVDTLSNVAVDQPAISTPSDVVGSDAGDTSKVSSGTSTPRMAAPIARRSNRHHPYSRPSSTRPQCQLEDQGICDPNDRFVHFECGHSVHERCQQSTSNSENQMDEEIGECPKCRNEEHK.

Positions M1–R17 are enriched in polar residues. The disordered stretch occupies residues M1–P50. The segment covering Q18–L27 has biased composition (basic and acidic residues). Residues C107 to R150 form an RING-type 1; degenerate zinc finger. Polar residues-rich tracts occupy residues G177–V193, P252–S263, and N277–F302. Disordered regions lie at residues G177–V214, S238–R387, Q500–T543, E561–H619, S638–Q688, and R713–K741. Positions T316–T332 are enriched in low complexity. Polar residues-rich tracts occupy residues D333–A344 and P357–N386. 3 stretches are compositionally biased toward polar residues: residues R563–V586, E604–H619, and S652–P661. The RING-type 2; degenerate zinc finger occupies C687–R736. Residues E731–K741 are compositionally biased toward basic and acidic residues.

It localises to the nucleus. This is an uncharacterized protein from Schizosaccharomyces pombe (strain 972 / ATCC 24843) (Fission yeast).